Consider the following 113-residue polypeptide: uncharacterized protein (113 aa).

Residues 1–19 are compositionally biased toward basic and acidic residues; sequence MDKKSAHRNPEDAKAGKYE. The segment at 1–94 is disordered; sequence MDKKSAHRNP…NKWRGKRKVS (94 aa). The segment covering 20 to 41 has biased composition (basic residues); it reads GKHKRKKKRKQNQNQHRSRHRS. The span at 52–66 shows a compositional bias: low complexity; it reads FPSSSSSSSGSQTDS. The segment covering 75-92 has biased composition (basic residues); the sequence is KIKKKRREKTNKWRGKRK.

This is an uncharacterized protein from Macaca fascicularis (Crab-eating macaque).